The primary structure comprises 638 residues: Zona pellucida sperm-binding protein 1 (638 aa).

The signal sequence occupies residues Met1–Gly25. Over Arg26–Pro601 the chain is Extracellular. N-linked (GlcNAc...) asparagine glycosylation occurs at Asn76. Residues Leu165–Ser175 are compositionally biased toward polar residues. The tract at residues Leu165–Leu208 is disordered. A P-type domain is found at Glu234–Asn274. 3 disulfide bridges follow: Cys236–Cys261, Cys245–Cys260, and Cys255–Cys270. In terms of domain architecture, ZP spans Gln279–Gln553. A glycan (N-linked (GlcNAc...) asparagine) is linked at Asn379. Cys457 and Cys478 are disulfide-bonded. The segment at Gly549 to Asn594 is disordered. Positions Arg554–Gln638 are cleaved as a propeptide — removed in mature form. 2 N-linked (GlcNAc...) asparagine glycosylation sites follow: Asn561 and Asn596. The helical transmembrane segment at Leu602–Val622 threads the bilayer. Over Gly623 to Gln638 the chain is Cytoplasmic.

This sequence belongs to the ZP domain family. ZPB subfamily. Polymers of ZP2 and ZP3 organized into long filaments cross-linked by ZP1 homodimers. Interacts with ZP3. Post-translationally, proteolytically cleaved before the transmembrane segment to yield the secreted ectodomain incorporated in the zona pellucida. In terms of processing, O-glycosylated. In terms of tissue distribution, expressed in oocytes (at protein level).

It is found in the zona pellucida. The protein resides in the cell membrane. Functionally, component of the zona pellucida, an extracellular matrix surrounding oocytes which mediates sperm binding, induction of the acrosome reaction and prevents post-fertilization polyspermy. The zona pellucida is composed of 3 to 4 glycoproteins, ZP1, ZP2, ZP3, and ZP4. ZP1 ensures the structural integrity of the zona pellucida. The polypeptide is Zona pellucida sperm-binding protein 1 (ZP1) (Homo sapiens (Human)).